Reading from the N-terminus, the 449-residue chain is MQKYDFDLFVIGAGSGGVRAARIAAGHGAKVAIAEEYRFGGTCVIRGCVPKKLLMYASQYGQGFEDAAGFGWHSAATSHSWTSLIAAKDAEIARLEGVYQRLIENANVEIFKGRAQIAGPNRVTVTGASVSARTILIATGARPVMPPVAGANLMITSDDVFDLPVGPPRIAIIGGGYIACEFAGIFNGLGRHVVQLHRGSQVLRGFDDELREHLGDELKKSGIDLRLGVDVVAVERQRGALSVQLTTGDAMEVDAVMAATGRLPNTWGLGLETVDVGLDQNGAIKVDEYSRTSSPGIYAVGDVTNRLNLTPVAIHEGHAFADTVFGGKALPTEHENVPFAVFSQPQAASVGLSEAQARDRYSNVEIYGSAFRPMRAALSGRDEKALVKLVVNGSNDRVVGAHIVGADAAEIIQGIAVAIKARATKADFDATLGVHPTLAEEFVTLRNRR.

FAD is bound by residues Ser15, Gly16, Glu35, Thr42, Cys43, and Lys51. Position 15 (Ser15) interacts with glutathione. Cys43 and Cys48 are disulfide-bonded. Tyr99 is a binding site for glutathione. Ala115 contacts FAD. The NADP(+) site is built by Gly175, Ile178, Glu181, Arg198, Arg204, and Gly261. 2 residues coordinate FAD: Asp302 and Thr310. Ala340 provides a ligand contact to NADP(+). Position 435 (His435) interacts with FAD. Residue His435 is the Proton acceptor of the active site.

Belongs to the class-I pyridine nucleotide-disulfide oxidoreductase family. In terms of assembly, homodimer. It depends on FAD as a cofactor.

It localises to the cytoplasm. The enzyme catalyses 2 glutathione + NADP(+) = glutathione disulfide + NADPH + H(+). It functions in the pathway xenobiotic degradation; (2,4,5-trichlorophenoxy)acetate degradation. Catalyzes the reduction of glutathione disulfide (GSSG) to reduced glutathione (GSH). Constitutes the major mechanism to maintain a high GSH:GSSG ratio in the cytosol. The polypeptide is Glutathione reductase (gor) (Burkholderia cepacia (Pseudomonas cepacia)).